Here is a 104-residue protein sequence, read N- to C-terminus: Type IV secretion system protein PtlB homolog (104 aa).

A helical membrane pass occupies residues 30 to 50 (IALLGIWFSIAFLALFPVALL).

The protein belongs to the virB3 family.

It is found in the cell membrane. In Bordetella bronchiseptica (strain ATCC BAA-588 / NCTC 13252 / RB50) (Alcaligenes bronchisepticus), this protein is Type IV secretion system protein PtlB homolog (ptlB).